A 358-amino-acid polypeptide reads, in one-letter code: MRPLVATVDLTALRHNYLLAKQCAPQRKAFAVVKANAYGHGAPEAVTALREIADGFAVACLEEAEVIRGCAPEARILLLEGCFEPSEYLRAAELGLDIAVQDARQADWLLAADLARPLNVWLKLDSGMHRLGFSVDGLRECHARLKGAAQVGELNLISHFACADERGHALTETQLERYAELLELPFEHCSLANSAAVLTLPQAHMAWIRPGIMLYGATPFAELSARELGLKPVMTLTGALIAVRDVPVGESVGYGASWVAQRPSRIGTVSCGYADGYPRTAPSGTSVVIHGQRVPLAGRVSMDMLAVDLTDLPQAQLGDAVELWGAQMPIDELAQACGTIGYELLTKVTGRVPRRYIG.

The active-site Proton acceptor; specific for D-alanine is the K34. K34 is subject to N6-(pyridoxal phosphate)lysine. R130 contacts substrate. Residue Y254 is the Proton acceptor; specific for L-alanine of the active site. M302 lines the substrate pocket.

It belongs to the alanine racemase family. Pyridoxal 5'-phosphate serves as cofactor.

It catalyses the reaction L-alanine = D-alanine. It functions in the pathway amino-acid biosynthesis; D-alanine biosynthesis; D-alanine from L-alanine: step 1/1. In terms of biological role, catalyzes the interconversion of L-alanine and D-alanine. May also act on other amino acids. In Stutzerimonas stutzeri (strain A1501) (Pseudomonas stutzeri), this protein is Alanine racemase (alr).